We begin with the raw amino-acid sequence, 148 residues long: CLKRLQPGEMSLQLLLSGCRLRLEQETGVLGRFADLTRKIIQPDSDETVRFSDGIFIRGLIPQRCNTRFSRLAILNCYYTYKGSLTTPICSENVTWLIVKPRLPATNNMMRKFRRLETPAGKNPPLMCDNFRPVQPLNGRTVFEVHRI.

Residues 1 to 146 enclose the Alpha-carbonic anhydrase domain; it reads CLKRLQPGEM…LNGRTVFEVH (146 aa).

Belongs to the alpha-carbonic anhydrase family. Zn(2+) serves as cofactor. In terms of tissue distribution, component of the acid-insoluble organic matrix of the aragonitic skeleton (at protein level).

The protein resides in the secreted. The enzyme catalyses hydrogencarbonate + H(+) = CO2 + H2O. In terms of biological role, reversible hydration of carbon dioxide. The chain is Putative carbonic anhydrase from Acropora millepora (Staghorn coral).